The sequence spans 122 residues: Protein FLORAL ORGAN NUMBER2 (122 aa).

The N-terminal stretch at 1 to 25 (MGRLFLCLVVAWCWVALLLVAPVHG) is a signal peptide. The interval 28-122 (GLPGEFSGDQ…PEHARSTGRP (95 aa)) is disordered. Positions 54–63 (KQPRGVKGTR) are enriched in basic residues. The span at 64 to 77 (RPSWSSWSSTASRS) shows a compositional bias: low complexity. Positions 111 to 122 (RRPEHARSTGRP) are enriched in basic and acidic residues.

This sequence belongs to the CLV3/ESR signal peptide family.

It localises to the secreted. Functionally, probable extracellular signal that regulates meristem maintenance. May function as a putative ligand for a receptor complex including FON1. Regulates the size of the floral meristem and the number of floral organs. The polypeptide is Protein FLORAL ORGAN NUMBER2 (FON2) (Oryza sativa subsp. indica (Rice)).